Consider the following 481-residue polypeptide: Cytochrome c oxidase subunit 1 (481 aa).

A helical transmembrane segment spans residues 22-42 (ISYLWLAYWFGMIGFYMSVLI). Positions 45 and 50 each coordinate Ca(2+). A run of 8 helical transmembrane segments spans residues 64-84 (LLFTLHGLIMVFFNIMTGLFG), 109-129 (SLLFQPIGFVLVVSSIYLEIG), 151-171 (FIIFGLLAAGIASTLSSVNFI), 194-214 (IVLTSFLLLLSLPVVTAVFLM), 240-260 (LFWFFGHPEVYIMILPGFGII), 278-298 (MILAMGFNSFVRLFGLGTSYV), 309-329 (YFTTVTILIALPTGNKIFNWV), and 343-363 (LVLFTVLFIVNFVIGGTTGVV). His69 serves as a coordination point for Fe(II)-heme a. His246 contributes to the Cu cation binding site. The segment at residues 246–250 (HPEVY) is a cross-link (1'-histidyl-3'-tyrosine (His-Tyr)). Tyr250 is an O2 binding site. Mg(2+) is bound by residues His374 and Asp375. His382 serves as a coordination point for heme a3. Helical transmembrane passes span 382 to 402 (HFHFVLSIGAIISMICFIIYI) and 420 to 440 (IAPIFMISVLLTFLPMHFTGF). His384 is a Fe(II)-heme a binding site. Residue Pro448 coordinates Ca(2+). Residues 459–479 (FICTLGATMMLVLKLAILFII) form a helical membrane-spanning segment.

It belongs to the heme-copper respiratory oxidase family. In terms of assembly, component of the cytochrome c oxidase (complex IV, CIV), a multisubunit enzyme composed of a catalytic core of 3 subunits and several supernumerary subunits. The complex exists as a monomer or a dimer and forms supercomplexes (SCs) in the inner mitochondrial membrane with ubiquinol-cytochrome c oxidoreductase (cytochrome b-c1 complex, complex III, CIII). It depends on heme as a cofactor. Requires Cu cation as cofactor.

It localises to the mitochondrion inner membrane. The catalysed reaction is 4 Fe(II)-[cytochrome c] + O2 + 8 H(+)(in) = 4 Fe(III)-[cytochrome c] + 2 H2O + 4 H(+)(out). Its pathway is energy metabolism; oxidative phosphorylation. In terms of biological role, component of the cytochrome c oxidase, the last enzyme in the mitochondrial electron transport chain which drives oxidative phosphorylation. The respiratory chain contains 3 multisubunit complexes succinate dehydrogenase (complex II, CII), ubiquinol-cytochrome c oxidoreductase (cytochrome b-c1 complex, complex III, CIII) and cytochrome c oxidase (complex IV, CIV), that cooperate to transfer electrons derived from NADH and succinate to molecular oxygen, creating an electrochemical gradient over the inner membrane that drives transmembrane transport and the ATP synthase. Cytochrome c oxidase is the component of the respiratory chain that catalyzes the reduction of oxygen to water. Electrons originating from reduced cytochrome c in the intermembrane space (IMS) are transferred via the dinuclear copper A center (CU(A)) of subunit 2 and heme A of subunit 1 to the active site in subunit 1, a binuclear center (BNC) formed by heme A3 and copper B (CU(B)). The BNC reduces molecular oxygen to 2 water molecules using 4 electrons from cytochrome c in the IMS and 4 protons from the mitochondrial matrix. This chain is Cytochrome c oxidase subunit 1 (MT-CO1), found in Theileria parva (East coast fever infection agent).